The sequence spans 663 residues: Zeaxanthin epoxidase, chloroplastic (663 aa).

A chloroplast-targeting transit peptide spans 1 to 50; sequence MYSTVFYTSVHPSTSAFSRKQLPLLISKDFPTELYHSLPCSRSLENGQIK. Residues 81-109 and 359-372 each bind FAD; these read KVLV…LVFE and TFSW…LLGD. Residues 547–611 enclose the FHA domain; the sequence is LVLSRDENMP…HGTWITDNEG (65 aa).

Requires FAD as cofactor. As to expression, higher expression in leaves than in roots.

The protein resides in the plastid. Its subcellular location is the chloroplast membrane. The protein localises to the chloroplast thylakoid membrane. The catalysed reaction is all-trans-zeaxanthin + 4 reduced [2Fe-2S]-[ferredoxin] + 2 O2 + 4 H(+) = all-trans-violaxanthin + 4 oxidized [2Fe-2S]-[ferredoxin] + 2 H2O. The protein operates within plant hormone biosynthesis; abscisate biosynthesis. Its function is as follows. Converts zeaxanthin into antheraxanthin and subsequently violaxanthin. Involved in the epoxidation of zeaxanthin. Plays an important role in resistance to stresses, seed development and dormancy. This is Zeaxanthin epoxidase, chloroplastic (ABA2) from Nicotiana plumbaginifolia (Leadwort-leaved tobacco).